Consider the following 218-residue polypeptide: 23 kDa integral membrane protein (218 aa).

The Cytoplasmic segment spans residues Met-1–Lys-12. Residues Ser-13 to Val-36 form a helical membrane-spanning segment. At Glu-37–Pro-55 the chain is on the extracellular side. Residues Ile-56–Leu-71 form a helical membrane-spanning segment. The Cytoplasmic segment spans residues Gly-72–Cys-82. The chain crosses the membrane as a helical span at residues Met-83–Tyr-108. Over Lys-109–Asn-183 the chain is Extracellular. Residue Asn-165 is glycosylated (N-linked (GlcNAc...) asparagine). A helical transmembrane segment spans residues Leu-184–Ala-205. Residues Cys-206–Val-218 lie on the Cytoplasmic side of the membrane.

It belongs to the tetraspanin (TM4SF) family.

The protein resides in the membrane. This chain is 23 kDa integral membrane protein, found in Schistosoma mansoni (Blood fluke).